The following is a 372-amino-acid chain: Pepsin A (372 aa).

A propeptide spans 1 to 42 (MSVVKIPLVKKKSLRQNLIENGKLKEFMRTHKYNLGSKYIRE) (activation peptide). Residues 60 to 369 (YFGTIGIGTP…DRGNNQIGLA (310 aa)) enclose the Peptidase A1 domain. D78 is an active-site residue. C91 and C96 form a disulfide bridge. S114 carries the phosphoserine modification. C252 and C256 are oxidised to a cystine. D261 is a catalytic residue. C295 and C328 are disulfide-bonded.

Belongs to the peptidase A1 family.

The protein localises to the secreted. It carries out the reaction Preferential cleavage: hydrophobic, preferably aromatic, residues in P1 and P1' positions. Cleaves 1-Phe-|-Val-2, 4-Gln-|-His-5, 13-Glu-|-Ala-14, 14-Ala-|-Leu-15, 15-Leu-|-Tyr-16, 16-Tyr-|-Leu-17, 23-Gly-|-Phe-24, 24-Phe-|-Phe-25 and 25-Phe-|-Tyr-26 bonds in the B chain of insulin.. Shows particularly broad specificity; although bonds involving phenylalanine and leucine are preferred, many others are also cleaved to some extent. The chain is Pepsin A (PGA) from Bos taurus (Bovine).